The following is a 414-amino-acid chain: Tar DNA-binding protein homolog 1 (414 aa).

Basic and acidic residues-rich tracts occupy residues 1–44 (MADE…KTTD) and 153–167 (DDGR…RAVE). 2 disordered regions span residues 1 to 58 (MADE…GDEP) and 132 to 167 (SSAD…RAVE). RRM domains lie at 173–259 (VDLI…QGRP) and 262–341 (SRIF…IAQP). The interval 343 to 414 (EENNQSVGPD…APGDSRGPGW (72 aa)) is disordered. Basic and acidic residues predominate over residues 361 to 373 (NRRERDRPDRRPI).

Interacts with chromobox protein homolog hpl-2; interaction may maintain localization of hpl-2 to gene bodies. Widely expressed in a range of tissues including body wall muscles, pharynx and neurons of the midbody in adults and larvae.

Its subcellular location is the nucleus. The protein localises to the cytoplasm. Functionally, RNA-binding protein which regulates transcription, splicing and RNA-editing. Limits the accumulation of double-stranded RNA by maintaining the abundance of the mature RNA transcripts that are formed from double-stranded precursor RNAs. Stress response protein that acts downstream of daf-16 in the insulin/IGF pathway to regulate longevity and the cellular stress response to osmotic, oxidative, proteotoxic and endoplasmic reticulum stress. Involved in the regulation of physiological processes including aging, fertility, growth and locomotion. Plays a role in maintaining localization of chromobox protein homolog hpl-2 to gene bodies, perhaps acting via binding to nascent RNA transcripts. The sequence is that of Tar DNA-binding protein homolog 1 from Caenorhabditis elegans.